The sequence spans 151 residues: Deoxyuridine 5'-triphosphate nucleotidohydrolase (151 aa).

Residues 71 to 73, asparagine 84, and 88 to 90 contribute to the substrate site; these read RSG and TID.

Belongs to the dUTPase family. The cofactor is Mg(2+).

The enzyme catalyses dUTP + H2O = dUMP + diphosphate + H(+). It participates in pyrimidine metabolism; dUMP biosynthesis; dUMP from dCTP (dUTP route): step 2/2. Functionally, this enzyme is involved in nucleotide metabolism: it produces dUMP, the immediate precursor of thymidine nucleotides and it decreases the intracellular concentration of dUTP so that uracil cannot be incorporated into DNA. This Gluconobacter oxydans (strain 621H) (Gluconobacter suboxydans) protein is Deoxyuridine 5'-triphosphate nucleotidohydrolase.